Consider the following 371-residue polypeptide: MMLQLEQIRRDLHQIPELGFQEFKTQAYLLERINEIATENVEIKKWSTGILVYVHGKSPARKIGFRADIDGLPILEQTNLPYASLHEGRMHACGHDLHMTIALGALEKLIQDPINDDVIFVFQPAEEGPGGAKPMLESEEFQQWKPDMMFALHIAPELPVGTVSSKAGLLFANTSELFIDFEGVGGHAAYPHLTKDMTVAASNFVVQLQQIVSRGLNPLDGSVITIGKMESGYVQNAIAETARLEGTIRSTDADAIDMIKSKLNRLMKGFEISYDCTIKVDYGANYYQVVNDATYVQQFENVINQTQTITYQQADAAMTGEDFGDMLKEIPGFMFWLGVDSSYGLHNARLNPKEEAIDVGVNAVISMITSF.

Asp-68 is an active-site residue. Glu-127 serves as the catalytic Proton acceptor.

It belongs to the peptidase M20A family. N-acetyldiaminopimelate deacetylase subfamily.

The catalysed reaction is N-acetyl-(2S,6S)-2,6-diaminopimelate + H2O = (2S,6S)-2,6-diaminopimelate + acetate. Its pathway is amino-acid biosynthesis; L-lysine biosynthesis via DAP pathway; LL-2,6-diaminopimelate from (S)-tetrahydrodipicolinate (acetylase route): step 3/3. Its function is as follows. Catalyzes the conversion of N-acetyl-diaminopimelate to diaminopimelate and acetate. This Oceanobacillus iheyensis (strain DSM 14371 / CIP 107618 / JCM 11309 / KCTC 3954 / HTE831) protein is N-acetyldiaminopimelate deacetylase.